We begin with the raw amino-acid sequence, 306 residues long: 4-hydroxy-3-methylbut-2-enyl diphosphate reductase 1 (306 aa).

Cys-10 provides a ligand contact to [4Fe-4S] cluster. The (2E)-4-hydroxy-3-methylbut-2-enyl diphosphate site is built by His-39 and His-72. Dimethylallyl diphosphate contacts are provided by His-39 and His-72. His-39 and His-72 together coordinate isopentenyl diphosphate. Cys-94 is a binding site for [4Fe-4S] cluster. His-122 is a (2E)-4-hydroxy-3-methylbut-2-enyl diphosphate binding site. His-122 is a binding site for dimethylallyl diphosphate. Residue His-122 participates in isopentenyl diphosphate binding. Residue Glu-124 is the Proton donor of the active site. Position 162 (Thr-162) interacts with (2E)-4-hydroxy-3-methylbut-2-enyl diphosphate. Cys-192 contributes to the [4Fe-4S] cluster binding site. Residues Ser-220, Ser-221, Asn-222, and Ser-264 each coordinate (2E)-4-hydroxy-3-methylbut-2-enyl diphosphate. Residues Ser-220, Ser-221, Asn-222, and Ser-264 each coordinate dimethylallyl diphosphate. Isopentenyl diphosphate is bound by residues Ser-220, Ser-221, Asn-222, and Ser-264.

It belongs to the IspH family. [4Fe-4S] cluster serves as cofactor.

It catalyses the reaction isopentenyl diphosphate + 2 oxidized [2Fe-2S]-[ferredoxin] + H2O = (2E)-4-hydroxy-3-methylbut-2-enyl diphosphate + 2 reduced [2Fe-2S]-[ferredoxin] + 2 H(+). The enzyme catalyses dimethylallyl diphosphate + 2 oxidized [2Fe-2S]-[ferredoxin] + H2O = (2E)-4-hydroxy-3-methylbut-2-enyl diphosphate + 2 reduced [2Fe-2S]-[ferredoxin] + 2 H(+). It participates in isoprenoid biosynthesis; dimethylallyl diphosphate biosynthesis; dimethylallyl diphosphate from (2E)-4-hydroxy-3-methylbutenyl diphosphate: step 1/1. The protein operates within isoprenoid biosynthesis; isopentenyl diphosphate biosynthesis via DXP pathway; isopentenyl diphosphate from 1-deoxy-D-xylulose 5-phosphate: step 6/6. Catalyzes the conversion of 1-hydroxy-2-methyl-2-(E)-butenyl 4-diphosphate (HMBPP) into a mixture of isopentenyl diphosphate (IPP) and dimethylallyl diphosphate (DMAPP). Acts in the terminal step of the DOXP/MEP pathway for isoprenoid precursor biosynthesis. The polypeptide is 4-hydroxy-3-methylbut-2-enyl diphosphate reductase 1 (Rhodopseudomonas palustris (strain ATCC BAA-98 / CGA009)).